The sequence spans 729 residues: Capsid protein VP1 (729 aa).

The segment covering 1-10 (MAPPAKRAKR) has biased composition (basic residues). Disordered stretches follow at residues 1–38 (MAPP…SDAA), 96–115 (LATD…KRTR), and 130–185 (KLTS…VGVS). The Nuclear localization signal signature appears at 4 to 13 (PAKRAKRGWV). A phospholipase A2-like region spans residues 19 to 64 (YLGPGNSLDQGEPTNPSDAAAKEHDEAYDQYIKSGKNPYLYFSAAD). Positions 25 to 35 (SLDQGEPTNPS) are enriched in polar residues. Positions 132 to 142 (TSSAAQQSSQT) are enriched in low complexity. Over residues 143–152 (MSDGTSQPDS) the composition is skewed to polar residues. Gly residues predominate over residues 168-184 (GPGGSGGGGSGGGGVGV). N325 serves as a coordination point for Mg(2+).

The protein belongs to the parvoviridae capsid protein family.

The protein resides in the virion. It localises to the host nucleus. Functionally, capsid protein self-assembles to form an icosahedral capsid with a T=1 symmetry, about 22 nm in diameter, and consisting of 60 copies of two size variants of the capsid proteins, VP1 and VP2, which differ by the presence of an N-terminal extension in the minor protein VP1. The capsid encapsulates the genomic ssDNA. Capsid proteins are responsible for the attachment to host cell receptors. This attachment induces virion internalization predominantly through clathrin-dependent endocytosis. Binding to the host receptors also induces capsid rearrangements leading to surface exposure of VP1 N-terminus, specifically its phospholipase A2-like region and putative nuclear localization signal(s). VP1 N-terminus might serve as a lipolytic enzyme to breach the endosomal membrane during entry into host cell and might contribute to virus transport to the nucleus. This is Capsid protein VP1 from Mus musculus (Mouse).